A 348-amino-acid polypeptide reads, in one-letter code: Competence protein ComGA (348 aa).

145–152 (GATGSGKT) is an ATP binding site.

Belongs to the GSP E family.

It localises to the cell membrane. Functionally, required for uptake of DNA by competent cells. The polypeptide is Competence protein ComGA (comGA) (Halalkalibacterium halodurans (strain ATCC BAA-125 / DSM 18197 / FERM 7344 / JCM 9153 / C-125) (Bacillus halodurans)).